Here is a 155-residue protein sequence, read N- to C-terminus: Protein SprT-like (155 aa).

The region spanning 7-145 (QRHMEEVSLQ…GSCGGKLIQT (139 aa)) is the SprT-like domain. Residue histidine 67 participates in Zn(2+) binding. Glutamate 68 is a catalytic residue. Histidine 71 is a binding site for Zn(2+).

This sequence belongs to the SprT family. It depends on Zn(2+) as a cofactor.

It localises to the cytoplasm. The protein is Protein SprT-like of Listeria monocytogenes serotype 4b (strain CLIP80459).